The sequence spans 536 residues: MAGGNTHRKKSCACCKEYLEHLGGKMRCFLRRMAADSMHSMIMPDRFVSHFGGKIPGTIKLESPNGILYVVEVTECMNKTLLQCGWEAFVDAHNIKEGESLLFRHIENSRYEVLILDSDDCEKVFSCAGIRNGSCVQDKTVDPVDSSGSSSNDTTQSSRSRNTENLTAMCSSSEKSGEDSPSGYEFHESVEPQTPSGSDYVLSRRTYLSEAQKERVVTHIQDIQPEITVFVAVMKKCNLQSPAPYLVISSRYASVHFPRETATITLQRPSKRKKWYPRFYKRIDKSDHMLRGQWQNFVHDNCLQEEDICLFVPTKGGRNFAFTVHLLQAEVTHSRDGTDVHKIGSSQNKRNSKMASQVHIKEAPGGDVSSESNKHGVSHESLESEDSDGPSEPPYISSMRRRLSQLQKKTVEEKVRAIQSEIPICVATISKLAGSGGKGKFRGLELSSRYAASYLPDKNHQTLVLQCKGMIWQINLVVRRRYTKGKRWFLTAGWRKFAHDNRLRVGDFCLFELKKKKKLTMEVHIISNLQRYPEVE.

Residues 26 to 119 (MRCFLRRMAA…RYEVLILDSD (94 aa)) constitute a DNA-binding region (TF-B3 1). Residues 138-199 (DKTVDPVDSS…VEPQTPSGSD (62 aa)) form a disordered region. Low complexity-rich tracts occupy residues 145 to 160 (DSSG…SSRS) and 171 to 183 (SSSE…SPSG). A DNA-binding region (TF-B3 2) is located at residues 231-330 (VAVMKKCNLQ…AFTVHLLQAE (100 aa)). The segment at 335 to 396 (RDGTDVHKIG…SDGPSEPPYI (62 aa)) is disordered. A compositionally biased stretch (polar residues) spans 344 to 355 (GSSQNKRNSKMA). Positions 372–382 (SNKHGVSHESL) are enriched in basic and acidic residues. The TF-B3 3 DNA-binding region spans 429-529 (ISKLAGSGGK…TMEVHIISNL (101 aa)).

Its subcellular location is the nucleus. This Oryza sativa subsp. japonica (Rice) protein is B3 domain-containing protein Os03g0619800.